A 344-amino-acid polypeptide reads, in one-letter code: N-acetyl-gamma-glutamyl-phosphate reductase (344 aa).

Residue Cys-150 is part of the active site.

The protein belongs to the NAGSA dehydrogenase family. Type 1 subfamily.

The protein localises to the cytoplasm. It catalyses the reaction N-acetyl-L-glutamate 5-semialdehyde + phosphate + NADP(+) = N-acetyl-L-glutamyl 5-phosphate + NADPH + H(+). Its pathway is amino-acid biosynthesis; L-arginine biosynthesis; N(2)-acetyl-L-ornithine from L-glutamate: step 3/4. Its function is as follows. Catalyzes the NADPH-dependent reduction of N-acetyl-5-glutamyl phosphate to yield N-acetyl-L-glutamate 5-semialdehyde. In Pseudomonas putida (strain ATCC 700007 / DSM 6899 / JCM 31910 / BCRC 17059 / LMG 24140 / F1), this protein is N-acetyl-gamma-glutamyl-phosphate reductase.